A 71-amino-acid polypeptide reads, in one-letter code: DNA-directed RNA polymerase subunit epsilon (71 aa).

Belongs to the RNA polymerase subunit epsilon family. In terms of assembly, RNAP is composed of a core of 2 alpha, a beta and a beta' subunit. The core is associated with a delta subunit, and at least one of epsilon or omega. When a sigma factor is associated with the core the holoenzyme is formed, which can initiate transcription.

It catalyses the reaction RNA(n) + a ribonucleoside 5'-triphosphate = RNA(n+1) + diphosphate. A non-essential component of RNA polymerase (RNAP). This Staphylococcus carnosus (strain TM300) protein is DNA-directed RNA polymerase subunit epsilon.